A 762-amino-acid chain; its full sequence is 5-methyltetrahydropteroyltriglutamate--homocysteine methyltransferase (762 aa).

5-methyltetrahydropteroyltri-L-glutamate-binding positions include 16-19 and Lys118; that span reads RELK. L-homocysteine-binding positions include 439 to 441 and Glu492; that span reads IGS. L-methionine-binding positions include 439-441 and Glu492; that span reads IGS. Residues 523-524 and Trp569 each bind 5-methyltetrahydropteroyltri-L-glutamate; that span reads RC. Asp607 serves as a coordination point for L-homocysteine. Asp607 contributes to the L-methionine binding site. 5-methyltetrahydropteroyltri-L-glutamate is bound at residue Glu613. Residues His649, Cys651, and Glu673 each contribute to the Zn(2+) site. Catalysis depends on His702, which acts as the Proton donor. Residue Cys734 participates in Zn(2+) binding.

The protein belongs to the vitamin-B12 independent methionine synthase family. Zn(2+) is required as a cofactor.

It catalyses the reaction 5-methyltetrahydropteroyltri-L-glutamate + L-homocysteine = tetrahydropteroyltri-L-glutamate + L-methionine. It functions in the pathway amino-acid biosynthesis; L-methionine biosynthesis via de novo pathway; L-methionine from L-homocysteine (MetE route): step 1/1. Its function is as follows. Catalyzes the transfer of a methyl group from 5-methyltetrahydrofolate to homocysteine resulting in methionine formation. This is 5-methyltetrahydropteroyltriglutamate--homocysteine methyltransferase from Pseudomonas entomophila (strain L48).